The sequence spans 102 residues: Late embryogenesis abundant protein D-19 (102 aa).

The interval 1–102 (MASEQYQAMR…IDESKFRTKN (102 aa)) is disordered. Over residues 48-58 (EGRHKGGETRK) the composition is skewed to basic and acidic residues.

Belongs to the small hydrophilic plant seed protein family.

Functionally, LEA proteins are late embryonic proteins abundant in higher plant seed embryos. There are two subsets of LEA proteins (5a and 5b), the first ones are expressed when the cotyledon weight reach 80 mg and the second set are expressed above 100 mg. The function of those proteins is not known. The chain is Late embryogenesis abundant protein D-19 from Gossypium hirsutum (Upland cotton).